Here is a 521-residue protein sequence, read N- to C-terminus: Cytochrome P450 monooxygenase gloO (521 aa).

The N-terminal stretch at 1-26 is a signal peptide; sequence MIAALFTTNLQLGAVGVFIFALLAFA. Cys464 serves as a coordination point for heme.

Belongs to the cytochrome P450 family. It depends on heme as a cofactor.

It functions in the pathway mycotoxin biosynthesis. Its function is as follows. Cytochrome P450 monooxygenase; part of the gene cluster that mediates the biosynthesis of pneumocandins, lipohexapeptides of the echinocandin family that prevent fungal cell wall formation by non-competitive inhibition of beta-1,3-glucan synthase. The 10,12-dimethylmyristoyl side chain is synthesized by the reducing polyketide synthase gloL/GLPKS4. The thioesterase gloN/GLHYD exclusively interacts with gloL/GLPKS4 to maintain turnover of the polyketide side chain. The 10R,12S-dimethylmyristic acid is then transferred to the first thiolation domain of the nonribosomal peptide synthetase gloA/GLNRPS4 by the acyl-AMP ligase gloD/GLligase, followed by its acylation to L-ornithine to trigger elongation of the cyclic hexapeptide. L-ornithine, 4R-hydroxyl-L-proline (generated from L-proline by the dioxygenase gloF/GLOXY2), 3S-hydroxyl-L-homotyrosine (generated by gloG/GLHtyB, gloH/GLHtyA, gloI/GLHtyC, gloJ/GLHtyD and hydroxylated at C-3 by the dioxygenase gloM/GLOXY1), 3R-hydroxyl-L-glutamine (generated from L-glutamine probably by the dioxygenase gloE/GLOXY3) and 3S-hydroxyl-L-proline (generated from L-proline by the dioxygenase gloF/GLOXY2 to yield pneumocandin B0), or 3S-hydroxyl-4S-methyl-L-proline (generated from L-leucine by the dioxygenase gloC/GLOXY4 to yield pneumocandin A0) are sequentially added to the growing chain. The last C domain of gloA/GLNRPS4 is proposed to be responsible for cyclization by condensation to form the peptide bond between L-ornithine and 3S-hydroxyl-4S-methyl-L-proline (for pneumocandin A0) or 3S-hydroxyl-L-proline (for pneumocandin B0). Finally, the subsequent C-4 hydroxylation of 3S-hydroxyl-L-homotyrosine and L-ornithine dihydroxylation at C-4 and C-5 are performed by the cytochrome P450 monooxygenases gloP/GLP450-1 and gloO/GLP450-2, respectively. This chain is Cytochrome P450 monooxygenase gloO, found in Glarea lozoyensis (strain ATCC 20868 / MF5171).